The chain runs to 237 residues: ATP synthase subunit 4, mitochondrial (237 aa).

The N-terminal 30 residues, M1 to Y30, are a transit peptide targeting the mitochondrion.

The protein belongs to the eukaryotic ATPase B chain family.

The protein localises to the mitochondrion. Its subcellular location is the mitochondrion inner membrane. Mitochondrial membrane ATP synthase (F(1)F(0) ATP synthase or Complex V) produces ATP from ADP in the presence of a proton gradient across the membrane which is generated by electron transport complexes of the respiratory chain. F-type ATPases consist of two structural domains, F(1) - containing the extramembraneous catalytic core, and F(0) - containing the membrane proton channel, linked together by a central stalk and a peripheral stalk. During catalysis, ATP synthesis in the catalytic domain of F(1) is coupled via a rotary mechanism of the central stalk subunits to proton translocation. Part of the complex F(0) domain and the peripheric stalk, which acts as a stator to hold the catalytic alpha(3)beta(3) subcomplex and subunit a/ATP6 static relative to the rotary elements. In Kluyveromyces lactis (strain ATCC 8585 / CBS 2359 / DSM 70799 / NBRC 1267 / NRRL Y-1140 / WM37) (Yeast), this protein is ATP synthase subunit 4, mitochondrial (ATP4).